Here is a 1881-residue protein sequence, read N- to C-terminus: Kinesin-like protein KIF26A (1881 aa).

Disordered stretches follow at residues 20–66 (PARE…AGGG), 145–193 (PASH…PPGP), and 309–330 (ASKRKKHHPPPAPSTRGTSTYP). Position 30 is a phosphoserine (Ser30). The region spanning 364 to 718 (KVKVMLRIWP…VQLAARIHRL (355 aa)) is the Kinesin motor domain. 462–469 (GHMSLGKS) is a binding site for ATP. Disordered regions lie at residues 718–778 (LRRK…SSEQ), 794–827 (SDRELTDNEGPPDFVPIIPALSRRRPSEGPRDAD), 846–982 (GSEA…QAAL), 1078–1104 (YTSQMSEGPGDPGEFPEGTAWAGGSPA), 1118–1266 (LSES…PRLP), 1328–1425 (SGSL…PYRP), 1442–1633 (SKVR…SGEL), and 1652–1698 (YESM…TGLQ). Residues 742–751 (RRPPHLRPFH) show a composition bias toward basic residues. Residues 818–827 (RPSEGPRDAD) show a composition bias toward basic and acidic residues. The segment covering 905 to 915 (SDPSKTGTQSE) has biased composition (polar residues). Over residues 940-950 (LPSPAPPPPRQ) the composition is skewed to pro residues. The span at 1084-1095 (EGPGDPGEFPEG) shows a compositional bias: low complexity. A compositionally biased stretch (basic and acidic residues) spans 1151–1162 (EESKVRSSECGR). Position 1257 is a phosphoserine (Ser1257). Low complexity predominate over residues 1328-1353 (SGSLKTTSGSKKSVSPKGAFFPRPSG). The span at 1366–1378 (LEQSTALTPTQAL) shows a compositional bias: polar residues. The segment covering 1390 to 1399 (RGEEEARPSG) has biased composition (basic and acidic residues). Polar residues predominate over residues 1400–1412 (RSDSSVPKATSSL). 3 stretches are compositionally biased toward low complexity: residues 1477-1489 (PAKGVGATKPPAG), 1524-1537 (PGPRAAPRAVPGIG), and 1575-1587 (WGSTDSDSGNDSG). Polar residues predominate over residues 1616 to 1629 (RYSSGHGSDNSSVL). Ser1654 carries the post-translational modification Phosphoserine. Residues 1664–1675 (SASSAPDSMSES) are compositionally biased toward low complexity. Positions 1685–1698 (RSLKSPKKRATGLQ) are enriched in basic residues. Residues 1780 to 1812 (LRLAERRQQRLQEVQAKRDHLCEELAETQGRLM) are a coiled coil.

The protein belongs to the TRAFAC class myosin-kinesin ATPase superfamily. Kinesin family. KIF26 subfamily. In terms of assembly, interacts with GRB2 (via SH2 domain). As to expression, expressed in several neuronal populations.

Its subcellular location is the cytoplasm. It is found in the cytoskeleton. Its function is as follows. Atypical kinesin that plays a key role in enteric neuron development. Acts by repressing a cell growth signaling pathway in the enteric nervous system development, possibly via its interaction with GRB2 that prevents GRB2-binding to SHC, thereby attenating the GDNF-Ret signaling. Binds to microtubules but lacks microtubule-based motility due to the absence of ATPase activity. Plays a critical role in cerebral cortical development. It probably acts as a microtubule stabilizer that regulates neurite growth and radial migration of cortical excitatory neurons. The protein is Kinesin-like protein KIF26A (Kif26a) of Mus musculus (Mouse).